The following is a 210-amino-acid chain: Large ribosomal subunit protein uL3 (210 aa).

The disordered stretch occupies residues 119–151; the sequence is FQGAIKRHGQSRGPMSHGSRYHRRPGSMGPVAP.

It belongs to the universal ribosomal protein uL3 family. Part of the 50S ribosomal subunit. Forms a cluster with proteins L14 and L19.

Its function is as follows. One of the primary rRNA binding proteins, it binds directly near the 3'-end of the 23S rRNA, where it nucleates assembly of the 50S subunit. This is Large ribosomal subunit protein uL3 from Bacillus cytotoxicus (strain DSM 22905 / CIP 110041 / 391-98 / NVH 391-98).